An 863-amino-acid polypeptide reads, in one-letter code: Probable beta-glucosidase A (863 aa).

Residues 1–19 (MKLGWLEAAALTAASVASA) form the signal peptide. Residues asparagine 65, asparagine 214, and asparagine 255 are each glycosylated (N-linked (GlcNAc...) asparagine). Aspartate 283 is an active-site residue. N-linked (GlcNAc...) asparagine glycosylation is found at asparagine 318, asparagine 325, asparagine 357, asparagine 493, asparagine 526, asparagine 545, asparagine 567, asparagine 664, and asparagine 715. The interval 720-754 (KESSGDPNYGWDDEDYIPEGAKDGSPQDVLPSGGG) is disordered.

This sequence belongs to the glycosyl hydrolase 3 family.

Its subcellular location is the secreted. The enzyme catalyses Hydrolysis of terminal, non-reducing beta-D-glucosyl residues with release of beta-D-glucose.. It functions in the pathway glycan metabolism; cellulose degradation. Beta-glucosidases are one of a number of cellulolytic enzymes involved in the degradation of cellulosic biomass. Catalyzes the last step releasing glucose from the inhibitory cellobiose. This is Probable beta-glucosidase A (bglA) from Emericella nidulans (strain FGSC A4 / ATCC 38163 / CBS 112.46 / NRRL 194 / M139) (Aspergillus nidulans).